Here is a 274-residue protein sequence, read N- to C-terminus: Penicillin-insensitive murein endopeptidase (274 aa).

The first 19 residues, 1–19 (MKKTAIALLAWFVSSASLA), serve as a signal peptide directing secretion. Intrachain disulfides connect cysteine 44/cysteine 265, cysteine 187/cysteine 235, and cysteine 216/cysteine 223. Positions 110, 113, 120, 147, and 150 each coordinate Zn(2+). The segment at 225–274 (DQPLPPPGDGCGAELQSWFEPPKPGTTKPEKKTPPPLPPSCQALLDEHVL) is disordered.

It belongs to the peptidase M74 family. As to quaternary structure, dimer. Requires Zn(2+) as cofactor.

It is found in the periplasm. In terms of biological role, murein endopeptidase that cleaves the D-alanyl-meso-2,6-diamino-pimelyl amide bond that connects peptidoglycan strands. Likely plays a role in the removal of murein from the sacculus. This Salmonella paratyphi A (strain ATCC 9150 / SARB42) protein is Penicillin-insensitive murein endopeptidase.